The sequence spans 461 residues: 3-oxoacyl-[acyl-carrier-protein] synthase, mitochondrial (461 aa).

A mitochondrion-targeting transit peptide spans 1-28; the sequence is MATSNLRRHLSASRLRLNRFISTSSSYH. In terms of domain architecture, Ketosynthase family 3 (KS3) spans 30–460; it reads HRRVVVTGLG…GTNASLLFAS (431 aa). Residues C209, H350, and H389 each act as for beta-ketoacyl synthase activity in the active site.

The protein belongs to the thiolase-like superfamily. Beta-ketoacyl-ACP synthases family. In terms of assembly, homodimer. Expressed at the same level in leaves, roots, siliques and flowers.

The protein localises to the mitochondrion. The catalysed reaction is a fatty acyl-[ACP] + malonyl-[ACP] + H(+) = a 3-oxoacyl-[ACP] + holo-[ACP] + CO2. It carries out the reaction butanoyl-[ACP] + malonyl-[ACP] + H(+) = 3-oxohexanoyl-[ACP] + holo-[ACP] + CO2. The enzyme catalyses hexanoyl-[ACP] + malonyl-[ACP] + H(+) = 3-oxooctanoyl-[ACP] + holo-[ACP] + CO2. It catalyses the reaction octanoyl-[ACP] + malonyl-[ACP] + H(+) = 3-oxodecanoyl-[ACP] + holo-[ACP] + CO2. The catalysed reaction is decanoyl-[ACP] + malonyl-[ACP] + H(+) = 3-oxododecanoyl-[ACP] + holo-[ACP] + CO2. It carries out the reaction dodecanoyl-[ACP] + malonyl-[ACP] + H(+) = 3-oxotetradecanoyl-[ACP] + holo-[ACP] + CO2. The enzyme catalyses tetradecanoyl-[ACP] + malonyl-[ACP] + H(+) = 3-oxohexadecanoyl-[ACP] + holo-[ACP] + CO2. It catalyses the reaction hexadecanoyl-[ACP] + malonyl-[ACP] + H(+) = 3-oxooctadecanoyl-[ACP] + holo-[ACP] + CO2. It participates in lipid metabolism; fatty acid biosynthesis. With respect to regulation, inhibited by cerulenin. Catalyzes all the condensation reaction of fatty acid synthesis by the addition to an acyl acceptor of two carbons from malonyl-ACP. Able to elongate saturated acyl chains from 4 to at least 16 carbons. Uses malonyl-CoA but not acetyl-CoA as primer substrate. When expressed in a heterologous system, reveals a bimodal distribution of products, with peaks at C8 and C14-C16. The major product of the reaction (octanoyl-ACP) is required for the lipoylation of essential mitochondrial proteins. Required for mitochondrial fatty acid synthesis (mtFAS). MtFAS are essential for photorespiration and plant development, probably by influencing mitochondrial membrane lipid composition and other lipid metabolic pathways. The chain is 3-oxoacyl-[acyl-carrier-protein] synthase, mitochondrial from Arabidopsis thaliana (Mouse-ear cress).